The chain runs to 142 residues: Putative pre-16S rRNA nuclease (142 aa).

This sequence belongs to the YqgF nuclease family.

Its subcellular location is the cytoplasm. Functionally, could be a nuclease involved in processing of the 5'-end of pre-16S rRNA. The chain is Putative pre-16S rRNA nuclease from Lactobacillus delbrueckii subsp. bulgaricus (strain ATCC BAA-365 / Lb-18).